The sequence spans 156 residues: Putative HTH-type transcriptional regulator BadM (156 aa).

The HTH rrf2-type domain maps to 4-130 (RLQKSTMCGL…RSVSITSLLK (127 aa)). Residues 136–156 (RRKTERGPNGASARHSSAGRA) form a disordered region. Residues 145–156 (GASARHSSAGRA) are compositionally biased toward low complexity.

In Rhodopseudomonas palustris (strain ATCC BAA-98 / CGA009), this protein is Putative HTH-type transcriptional regulator BadM (badM).